A 132-amino-acid polypeptide reads, in one-letter code: Fibroblast growth factor 1 (132 aa).

Heparin-binding positions include N10 and 108–120; that span reads KTKP…FGQK.

Belongs to the heparin-binding growth factors family.

The protein localises to the secreted. The protein resides in the cytoplasm. It is found in the cell cortex. Its subcellular location is the cytosol. It localises to the nucleus. Its function is as follows. Plays an important role in the regulation of cell survival, cell division, angiogenesis, cell differentiation and cell migration. Functions as a potent mitogen in vitro. Acts as a ligand for FGFR1 and integrins. Binds to FGFR1 in the presence of heparin leading to FGFR1 dimerization and activation via sequential autophosphorylation on tyrosine residues which act as docking sites for interacting proteins, leading to the activation of several signaling cascades. Binds to integrins. Its binding to integrins and subsequent ternary complex formation with integrins and FGFR1 are essential for FGF1 signaling. The chain is Fibroblast growth factor 1 (fgf1) from Notophthalmus viridescens (Eastern newt).